The following is a 504-amino-acid chain: Catalase (504 aa).

Residues H56 and N129 contribute to the active site. Residue Y339 participates in heme binding.

This sequence belongs to the catalase family. Homodimer. It depends on heme as a cofactor.

It carries out the reaction 2 H2O2 = O2 + 2 H2O. Decomposes hydrogen peroxide into water and oxygen; serves to protect cells from the toxic effects of hydrogen peroxide. This Staphylococcus epidermidis protein is Catalase (katA).